A 189-amino-acid chain; its full sequence is Probable DNA-directed RNA polymerase subunit delta (189 aa).

The HTH HARE-type domain maps to 14–81; it reads LSMIEVAHAI…GENVWALRTW (68 aa). Composition is skewed to acidic residues over residues 90-100 and 118-189; these read EVDHPEDDGDE and EGDD…EDEE. The disordered stretch occupies residues 90–189; sequence EVDHPEDDGD…DDLDDDEDEE (100 aa).

It belongs to the RpoE family. RNAP is composed of a core of 2 alpha, a beta and a beta' subunits. The core is associated with a delta subunit and one of several sigma factors.

Functionally, participates in both the initiation and recycling phases of transcription. In the presence of the delta subunit, RNAP displays an increased specificity of transcription, a decreased affinity for nucleic acids, and an increased efficiency of RNA synthesis because of enhanced recycling. This chain is Probable DNA-directed RNA polymerase subunit delta, found in Lactobacillus delbrueckii subsp. bulgaricus (strain ATCC 11842 / DSM 20081 / BCRC 10696 / JCM 1002 / NBRC 13953 / NCIMB 11778 / NCTC 12712 / WDCM 00102 / Lb 14).